The chain runs to 66 residues: Large ribosomal subunit protein uL29 (66 aa).

Belongs to the universal ribosomal protein uL29 family.

The chain is Large ribosomal subunit protein uL29 from Rhizobium rhizogenes (strain K84 / ATCC BAA-868) (Agrobacterium radiobacter).